We begin with the raw amino-acid sequence, 167 residues long: uncharacterized protein (167 aa).

Residues 1 to 21 (MFDFSFPTPASAGTRMGPASC) form a disordered region.

This is an uncharacterized protein from Homo sapiens (Human).